The following is a 349-amino-acid chain: Zinc-type alcohol dehydrogenase-like protein PB24D3.08c (349 aa).

It belongs to the zinc-containing alcohol dehydrogenase family. Quinone oxidoreductase subfamily.

It localises to the cytoplasm. The protein localises to the nucleus. The polypeptide is Zinc-type alcohol dehydrogenase-like protein PB24D3.08c (Schizosaccharomyces pombe (strain 972 / ATCC 24843) (Fission yeast)).